The sequence spans 325 residues: Fiber protein (325 aa).

The protein belongs to the adenoviridae fiber family. Homotrimer. Interacts with host receptor CD46. Interacts (via N-terminal tail region) with pentons.

Its subcellular location is the virion. The protein resides in the host nucleus. Forms spikes that protrude from each vertex of the icosahedral capsid. Interacts with host receptor CD46 to provide virion initial attachment to target cell. Fiber proteins are shed during virus entry, when virus is still at the cell surface. The protein is Fiber protein of Human adenovirus B serotype 11 (strain BC34) (HAdV-11).